Here is a 271-residue protein sequence, read N- to C-terminus: 4-diphosphocytidyl-2-C-methyl-D-erythritol kinase (271 aa).

K8 is a catalytic residue. 90–100 (PFGAGLGGGSA) is an ATP binding site. D132 is an active-site residue.

This sequence belongs to the GHMP kinase family. IspE subfamily.

It catalyses the reaction 4-CDP-2-C-methyl-D-erythritol + ATP = 4-CDP-2-C-methyl-D-erythritol 2-phosphate + ADP + H(+). The protein operates within isoprenoid biosynthesis; isopentenyl diphosphate biosynthesis via DXP pathway; isopentenyl diphosphate from 1-deoxy-D-xylulose 5-phosphate: step 3/6. In terms of biological role, catalyzes the phosphorylation of the position 2 hydroxy group of 4-diphosphocytidyl-2C-methyl-D-erythritol. In Parabacteroides distasonis (strain ATCC 8503 / DSM 20701 / CIP 104284 / JCM 5825 / NCTC 11152), this protein is 4-diphosphocytidyl-2-C-methyl-D-erythritol kinase.